We begin with the raw amino-acid sequence, 107 residues long: U1-lycotoxin-Ls1d (107 aa).

The N-terminal stretch at 1-20 is a signal peptide; sequence MMKVLVVVALLVTLISYSSS. The propeptide occupies 21–41; it reads EGIDDLEADELLSLMANEQTR. Cystine bridges form between C44-C59, C51-C68, C58-C86, and C70-C84.

It belongs to the neurotoxin 19 (CSTX) family. 04 (U1-Lctx) subfamily. Expressed by the venom gland.

It localises to the secreted. The protein is U1-lycotoxin-Ls1d of Lycosa singoriensis (Wolf spider).